The following is a 317-amino-acid chain: uncharacterized protein (317 aa).

This sequence to M.avium MAV169.

This is an uncharacterized protein from Mycobacterium tuberculosis (strain CDC 1551 / Oshkosh).